The primary structure comprises 366 residues: Tubulin-like protein CetZ (366 aa).

Residues 10–14 (QCGTK), 103–105 (GTG), Glu-136, Asn-163, and Asn-181 contribute to the GTP site.

It belongs to the CetZ family.

The protein resides in the cytoplasm. In terms of biological role, involved in cell shape control. This chain is Tubulin-like protein CetZ, found in Pyrococcus furiosus (strain ATCC 43587 / DSM 3638 / JCM 8422 / Vc1).